The primary structure comprises 443 residues: MKNIDVQQLTNQFPLVQSLIALEPVTWFNPKASTLAVGLPYVGLDGSDVADASARLARFAPYMCEAFPETRASKGILESEIVAIPAMQATLNTRYGVEVTGKLLLKKDSHLPISGSIKARGGIYEVLTHAEQLAIKAGLLCEEDDYRKLFSEEFRQFFGQYSIAVGSTGNLGMSIGIMSAKLGFTVTVHMSADAREWKKRKLREHGVIVVEYAEDYGVAVEQGRKEAERDPNCFFIDDENSRTLFLGYSVAGERVKTQFDQMGIKVDAEHPLFVYLPCGVGGGPGGVAFGLKLAFGDNVHCLFAEPTHSPCMLLGVHTGLHDQISVQDLGIDNLTAADGLAVGRASGFVGRAMERLLDGFYTLSDQEMYDLLGLLARDEQIKLEPSALAGMPGPWRIAADREWQTERGFDAATLARATHLVWATGGGMVPAEEMEKYLATAEI.

Position 118 is an N6-(pyridoxal phosphate)lysine (lysine 118).

It belongs to the serine/threonine dehydratase family. DsdA subfamily. The cofactor is pyridoxal 5'-phosphate.

The enzyme catalyses D-serine = pyruvate + NH4(+). The polypeptide is Probable D-serine dehydratase (Aeromonas salmonicida (strain A449)).